A 220-amino-acid chain; its full sequence is Large ribosomal subunit protein bL21 (220 aa).

The segment at 109–158 is disordered; sequence SKKVAAKPATSEEKAAEEKPAKAKKEAAEKGASPRETKAAPLFSAPEGEP. Residues 118–146 are compositionally biased toward basic and acidic residues; sequence TSEEKAAEEKPAKAKKEAAEKGASPRETK.

This sequence belongs to the bacterial ribosomal protein bL21 family. In terms of assembly, part of the 50S ribosomal subunit. Contacts protein L20.

Its function is as follows. This protein binds to 23S rRNA in the presence of protein L20. The sequence is that of Large ribosomal subunit protein bL21 from Chelativorans sp. (strain BNC1).